A 175-amino-acid chain; its full sequence is MQTCCQALLLLLAACTLPAHCLEPTCLHFSELLPARLRELRVKFEEIKDYFQSRDDELNIQLLSSELLDEFKGTFGCQSVSEMLRFYTDEVLPRAMQTSTSHQQSMGDLGNMLLGLKATMRRCHRFFTCEKRSKAIKQIKETFEKMDENGIYKAMGEFDIFINYIEEYLLMRRRK.

A signal peptide spans 1–21; the sequence is MQTCCQALLLLLAACTLPAHC. 2 disulfides stabilise this stretch: Cys-26–Cys-123 and Cys-77–Cys-129.

Belongs to the IL-10 family. As to quaternary structure, homodimer. Interacts with IL10RA and IL10RB. As to expression, expressed predominantly in bursa of Fabricius and cecal tonsils with low levels in thymus, liver and lung.

It localises to the secreted. In terms of biological role, major immune regulatory cytokine that acts on many cells of the immune system where it has profound anti-inflammatory functions, limiting excessive tissue disruption caused by inflammation. Mechanistically, IL10 binds to its heterotetrameric receptor comprising IL10RA and IL10RB leading to JAK1 and STAT2-mediated phosphorylation of STAT3. In turn, STAT3 translocates to the nucleus where it drives expression of anti-inflammatory mediators. Targets antigen-presenting cells (APCs) such as macrophages and monocytes and inhibits their release of pro-inflammatory cytokines including granulocyte-macrophage colony-stimulating factor /GM-CSF, granulocyte colony-stimulating factor/G-CSF, IL-1 alpha, IL-1 beta, IL-6, IL-8 and TNF-alpha. Also interferes with antigen presentation by reducing the expression of MHC-class II and co-stimulatory molecules, thereby inhibiting their ability to induce T cell activation. In addition, controls the inflammatory response of macrophages by reprogramming essential metabolic pathways including mTOR signaling. This is Interleukin-10 from Gallus gallus (Chicken).